Consider the following 451-residue polypeptide: UDP-N-acetylmuramoylalanine--D-glutamate ligase (451 aa).

119 to 125 (GSNGKTT) serves as a coordination point for ATP.

It belongs to the MurCDEF family.

Its subcellular location is the cytoplasm. The catalysed reaction is UDP-N-acetyl-alpha-D-muramoyl-L-alanine + D-glutamate + ATP = UDP-N-acetyl-alpha-D-muramoyl-L-alanyl-D-glutamate + ADP + phosphate + H(+). The protein operates within cell wall biogenesis; peptidoglycan biosynthesis. Cell wall formation. Catalyzes the addition of glutamate to the nucleotide precursor UDP-N-acetylmuramoyl-L-alanine (UMA). This Streptococcus agalactiae serotype Ia (strain ATCC 27591 / A909 / CDC SS700) protein is UDP-N-acetylmuramoylalanine--D-glutamate ligase.